The following is a 118-amino-acid chain: Small ribosomal subunit protein uS19c (118 aa).

A disordered region spans residues 92–118 (KKSSKKVTKNKKSIKKNIKTTSKKFKK).

The protein belongs to the universal ribosomal protein uS19 family.

It is found in the plastid. Protein S19 forms a complex with S13 that binds strongly to the 16S ribosomal RNA. This is Small ribosomal subunit protein uS19c (rps19) from Euglena longa (Euglenophycean alga).